Consider the following 37-residue polypeptide: Tick defensin 2 (37 aa).

3 disulfide bridges follow: cysteine 4-cysteine 26, cysteine 11-cysteine 34, and cysteine 15-cysteine 36.

Belongs to the invertebrate defensin family.

The protein resides in the secreted. Functionally, antibacterial peptide mostly active against Gram-positive bacteria (MIC=0.24 ug/ml on Bacillus subtilis, and MIC=0.94 ug/ml on Micrococcus luteus, MIC&gt;120 ug/ml on both Escherichia coli and Pseudomonas aeruginosa). The polypeptide is Tick defensin 2 (Ornithodoros savignyi (African eyed tampan)).